A 503-amino-acid chain; its full sequence is ATP synthase subunit alpha (503 aa).

170 to 177 provides a ligand contact to ATP; the sequence is GDRQTGKT.

It belongs to the ATPase alpha/beta chains family. F-type ATPases have 2 components, CF(1) - the catalytic core - and CF(0) - the membrane proton channel. CF(1) has five subunits: alpha(3), beta(3), gamma(1), delta(1), epsilon(1). CF(0) has three main subunits: a(1), b(2) and c(9-12). The alpha and beta chains form an alternating ring which encloses part of the gamma chain. CF(1) is attached to CF(0) by a central stalk formed by the gamma and epsilon chains, while a peripheral stalk is formed by the delta and b chains.

It localises to the cell inner membrane. It carries out the reaction ATP + H2O + 4 H(+)(in) = ADP + phosphate + 5 H(+)(out). Produces ATP from ADP in the presence of a proton gradient across the membrane. The alpha chain is a regulatory subunit. In Geobacter sulfurreducens (strain ATCC 51573 / DSM 12127 / PCA), this protein is ATP synthase subunit alpha.